The following is a 549-amino-acid chain: Glucose-6-phosphate isomerase (549 aa).

The active-site Proton donor is glutamate 353. Residues histidine 384 and lysine 513 contribute to the active site.

Belongs to the GPI family.

The protein resides in the cytoplasm. The catalysed reaction is alpha-D-glucose 6-phosphate = beta-D-fructose 6-phosphate. Its pathway is carbohydrate biosynthesis; gluconeogenesis. It participates in carbohydrate degradation; glycolysis; D-glyceraldehyde 3-phosphate and glycerone phosphate from D-glucose: step 2/4. Catalyzes the reversible isomerization of glucose-6-phosphate to fructose-6-phosphate. The sequence is that of Glucose-6-phosphate isomerase from Brucella melitensis biotype 2 (strain ATCC 23457).